The sequence spans 106 residues: Iron-sulfur cluster assembly protein CyaY (106 aa).

The protein belongs to the frataxin family. In terms of assembly, interacts with IscS. Certain pairs of proteins can bind simultaneously to IscS; IscS-IscU-CyaY complexes can be isolated in vitro, but (IscS-TusA-CyaY) complexes cannot.

Its function is as follows. Involved in iron-sulfur (Fe-S) cluster assembly. May act as a regulator of Fe-S biogenesis. The protein is Iron-sulfur cluster assembly protein CyaY of Escherichia coli O157:H7.